The chain runs to 155 residues: Ribonuclease H (155 aa).

In terms of domain architecture, RNase H type-1 spans 4–145 (QQKVVEIYTD…ADALARKAIA (142 aa)). Aspartate 13, glutamate 51, aspartate 73, and aspartate 137 together coordinate Mg(2+).

It belongs to the RNase H family. Monomer. Requires Mg(2+) as cofactor.

It localises to the cytoplasm. The catalysed reaction is Endonucleolytic cleavage to 5'-phosphomonoester.. Its function is as follows. Endonuclease that specifically degrades the RNA of RNA-DNA hybrids. This is Ribonuclease H from Bartonella tribocorum (strain CIP 105476 / IBS 506).